The sequence spans 396 residues: Elongation factor Tu (396 aa).

Residues 10-207 (KPHCNIGTIG…VDAYIPQPPR (198 aa)) enclose the tr-type G domain. A G1 region spans residues 19-26 (GHVDHGKT). Residue 19–26 (GHVDHGKT) coordinates GTP. Threonine 26 serves as a coordination point for Mg(2+). Residues 60-64 (GITIS) are G2. Positions 81–84 (DCPG) are G3. Residues 81–85 (DCPGH) and 136–139 (NKVD) contribute to the GTP site. The segment at 136-139 (NKVD) is G4. Residues 174–176 (SAL) are G5.

This sequence belongs to the TRAFAC class translation factor GTPase superfamily. Classic translation factor GTPase family. EF-Tu/EF-1A subfamily. Monomer.

Its subcellular location is the cytoplasm. It catalyses the reaction GTP + H2O = GDP + phosphate + H(+). Its function is as follows. GTP hydrolase that promotes the GTP-dependent binding of aminoacyl-tRNA to the A-site of ribosomes during protein biosynthesis. In Novosphingobium aromaticivorans (strain ATCC 700278 / DSM 12444 / CCUG 56034 / CIP 105152 / NBRC 16084 / F199), this protein is Elongation factor Tu.